Consider the following 388-residue polypeptide: MKRRLIIAASLFVFNLSSGFAAENIPFSPQPPEIHAGSWVLMDYTTGQILTAGNEHQQRNPASLTKLMTGYVVDRAIDSHRITPDDIVTVGRDAWAKDNPVFVGSSLMFLKEGDRVSVRDLSRGLIVDSGNDACVALADYIAGGQRQFVEMMNNYAEKLHLKDTHFETVHGLDAPGQHSSAYDLAVLSRAIIHGEPEFYHMYSEKSLTWNGITQQNRNGLLWDKTMNVDGLKTGHTSGAGFNLIASAVDGQRRLIAVVMGADSAKGREEEARKLLRWGQQNFTTVQILHRGKKVGTERIWYGDKENIDLGTEQEFWMVLPKAEIPHIKAKYTLDGKELTAPISAHQRVGEIELYDRDKQVAHWPLVTLESVGEGSMFSRLSDYFHHKA.

The signal sequence occupies residues 1–21; that stretch reads MKRRLIIAASLFVFNLSSGFA. Residue serine 63 is the Acyl-ester intermediate of the active site. The active-site Proton acceptor is lysine 66. Serine 129 is a catalytic residue. Residue lysine 232 participates in substrate binding.

This sequence belongs to the peptidase S11 family.

Its subcellular location is the cell inner membrane. It catalyses the reaction Preferential cleavage: (Ac)2-L-Lys-D-Ala-|-D-Ala. Also transpeptidation of peptidyl-alanyl moieties that are N-acyl substituents of D-alanine.. The protein operates within cell wall biogenesis; peptidoglycan biosynthesis. Removes C-terminal D-alanyl residues from sugar-peptide cell wall precursors. The polypeptide is D-alanyl-D-alanine carboxypeptidase DacD (dacD) (Escherichia coli (strain K12)).